The chain runs to 487 residues: Zinc finger protein 345 (487 aa).

C2H2-type zinc fingers lie at residues 62–84 (LECK…QRIH), 90–112 (YECK…QRIH), 118–140 (YECN…QRIH), 146–168 (YECK…QIIH), 174–196 (YECK…HRIH), 202–224 (YECK…RRVH), 230–252 (YECK…QRIH), 258–280 (YICN…QRIH), 286–308 (YVCK…QRIH), 314–336 (YECK…QRMH), 342–364 (YECK…QRIH), 370–392 (YECK…QLIH), 398–420 (YECR…QRIH), 426–448 (YECK…QRMH), and 454–476 (YECK…KKNH).

It belongs to the krueppel C2H2-type zinc-finger protein family.

The protein localises to the nucleus. In terms of biological role, may be involved in transcriptional regulation. The chain is Zinc finger protein 345 (ZNF345) from Bos taurus (Bovine).